We begin with the raw amino-acid sequence, 163 residues long: Large ribosomal subunit protein uL13m (163 aa).

Serine 2 carries the N-acetylserine modification. Residues 2–4 constitute a propeptide that is removed on maturation; the sequence is SQK.

Belongs to the universal ribosomal protein uL13 family. Component of the mitochondrial large ribosomal subunit (mt-LSU). Mature yeast 74S mitochondrial ribosomes consist of a small (37S) and a large (54S) subunit. The 37S small subunit contains a 15S ribosomal RNA (15S mt-rRNA) and 34 different proteins. The 54S large subunit contains a 21S rRNA (21S mt-rRNA) and 46 different proteins.

The protein resides in the mitochondrion. Component of the mitochondrial ribosome (mitoribosome), a dedicated translation machinery responsible for the synthesis of mitochondrial genome-encoded proteins, including at least some of the essential transmembrane subunits of the mitochondrial respiratory chain. The mitoribosomes are attached to the mitochondrial inner membrane and translation products are cotranslationally integrated into the membrane. The sequence is that of Large ribosomal subunit protein uL13m (MRPL23) from Saccharomyces cerevisiae (strain ATCC 204508 / S288c) (Baker's yeast).